The primary structure comprises 261 residues: Maspardin (261 aa).

Residues 87-159 (FCDGFRKLLD…NSFWLMPAFM (73 aa)) form the AB hydrolase-1 domain. Position 257 is a phosphoserine (S257).

This sequence belongs to the AB hydrolase superfamily. Interacts with CD4. Interacts with ALDH16A1.

Its subcellular location is the cytoplasm. Functionally, may play a role as a negative regulatory factor in CD4-dependent T-cell activation. The protein is Maspardin (Spg21) of Rattus norvegicus (Rat).